A 292-amino-acid chain; its full sequence is ATP synthase subunit a (292 aa).

A run of 6 helical transmembrane segments spans residues 37 to 57, 96 to 116, 144 to 164, 192 to 212, 230 to 250, and 263 to 283; these read IDSV…FWLC, FIAP…AMDM, VVPT…LVLC, PVFA…EYVA, LVFM…SGVL, and AIFH…LALI.

It belongs to the ATPase A chain family. As to quaternary structure, F-type ATPases have 2 components, CF(1) - the catalytic core - and CF(0) - the membrane proton channel. CF(1) has five subunits: alpha(3), beta(3), gamma(1), delta(1), epsilon(1). CF(0) has three main subunits: a(1), b(2) and c(9-12). The alpha and beta chains form an alternating ring which encloses part of the gamma chain. CF(1) is attached to CF(0) by a central stalk formed by the gamma and epsilon chains, while a peripheral stalk is formed by the delta and b chains.

It localises to the cell inner membrane. Functionally, key component of the proton channel; it plays a direct role in the translocation of protons across the membrane. The chain is ATP synthase subunit a from Paracidovorax citrulli (strain AAC00-1) (Acidovorax citrulli).